Reading from the N-terminus, the 505-residue chain is Glutamyl-tRNA(Gln) amidotransferase subunit A (505 aa).

Catalysis depends on charge relay system residues Lys80 and Ser155. Ser179 serves as the catalytic Acyl-ester intermediate.

It belongs to the amidase family. GatA subfamily. Heterotrimer of A, B and C subunits.

The enzyme catalyses L-glutamyl-tRNA(Gln) + L-glutamine + ATP + H2O = L-glutaminyl-tRNA(Gln) + L-glutamate + ADP + phosphate + H(+). Its function is as follows. Allows the formation of correctly charged Gln-tRNA(Gln) through the transamidation of misacylated Glu-tRNA(Gln) in organisms which lack glutaminyl-tRNA synthetase. The reaction takes place in the presence of glutamine and ATP through an activated gamma-phospho-Glu-tRNA(Gln). This Acidothermus cellulolyticus (strain ATCC 43068 / DSM 8971 / 11B) protein is Glutamyl-tRNA(Gln) amidotransferase subunit A.